A 117-amino-acid polypeptide reads, in one-letter code: Large ribosomal subunit protein bL20 (117 aa).

This sequence belongs to the bacterial ribosomal protein bL20 family.

Its function is as follows. Binds directly to 23S ribosomal RNA and is necessary for the in vitro assembly process of the 50S ribosomal subunit. It is not involved in the protein synthesizing functions of that subunit. The sequence is that of Large ribosomal subunit protein bL20 from Mannheimia succiniciproducens (strain KCTC 0769BP / MBEL55E).